The chain runs to 185 residues: Ribosome-recycling factor (185 aa).

The interval 136-159 (NEQLKSQQKDGKMSEDELKRSQDE) is disordered.

It belongs to the RRF family.

Its subcellular location is the cytoplasm. In terms of biological role, responsible for the release of ribosomes from messenger RNA at the termination of protein biosynthesis. May increase the efficiency of translation by recycling ribosomes from one round of translation to another. This chain is Ribosome-recycling factor, found in Pelotomaculum thermopropionicum (strain DSM 13744 / JCM 10971 / SI).